The primary structure comprises 342 residues: Foldase protein PrsA (342 aa).

The signal sequence occupies residues 1-22; the sequence is MVSVKKIVASALVGVLMFSAVG. Residue Cys23 is the site of N-palmitoyl cysteine attachment. The S-diacylglycerol cysteine moiety is linked to residue Cys23. A PpiC domain is found at 189 to 284; sequence DSGVLTKHLL…FGYHIIQAGA (96 aa).

Belongs to the PrsA family.

It is found in the cell membrane. The catalysed reaction is [protein]-peptidylproline (omega=180) = [protein]-peptidylproline (omega=0). In terms of biological role, plays a major role in protein secretion by helping the post-translocational extracellular folding of several secreted proteins. The chain is Foldase protein PrsA from Clostridium perfringens (strain ATCC 13124 / DSM 756 / JCM 1290 / NCIMB 6125 / NCTC 8237 / Type A).